The chain runs to 265 residues: tRNA pseudouridine synthase A (265 aa).

Asp-52 serves as the catalytic Nucleophile. Substrate is bound at residue Tyr-112.

This sequence belongs to the tRNA pseudouridine synthase TruA family. As to quaternary structure, homodimer.

It carries out the reaction uridine(38/39/40) in tRNA = pseudouridine(38/39/40) in tRNA. Formation of pseudouridine at positions 38, 39 and 40 in the anticodon stem and loop of transfer RNAs. The sequence is that of tRNA pseudouridine synthase A from Akkermansia muciniphila (strain ATCC BAA-835 / DSM 22959 / JCM 33894 / BCRC 81048 / CCUG 64013 / CIP 107961 / Muc).